The chain runs to 213 residues: 3-demethoxyubiquinol 3-hydroxylase (213 aa).

Residues Glu62, Glu92, His95, Glu144, Glu176, and His179 each contribute to the Fe cation site.

The protein belongs to the COQ7 family. Fe cation is required as a cofactor.

It localises to the cell membrane. The catalysed reaction is a 5-methoxy-2-methyl-3-(all-trans-polyprenyl)benzene-1,4-diol + AH2 + O2 = a 3-demethylubiquinol + A + H2O. The protein operates within cofactor biosynthesis; ubiquinone biosynthesis. In terms of biological role, catalyzes the hydroxylation of 2-nonaprenyl-3-methyl-6-methoxy-1,4-benzoquinol during ubiquinone biosynthesis. The sequence is that of 3-demethoxyubiquinol 3-hydroxylase from Psychrobacter sp. (strain PRwf-1).